We begin with the raw amino-acid sequence, 644 residues long: MSEKKKFYITTPIYYPSAKLHIGNTYTTVASDALVRFKRLQGYDAFMLTGTDEHGQKIQRIAEDKGITPKAYVDEIVAGIKDLWKMMNISYDKFIRTTDEEHVKAVQKIVKKFYDNGDIYKSAYEGWYCTPCESFWTETQLVDGKCPDCGRPVEKTKEEAYFFKMSKYADRLIKYIEDHPDFIQPESRKNEMLNNFLKPGLQDLCISRSSFDWGIPITFDEKHVIYVWIDALSNYITALGYGSDNDELYNKFWPADLHLVGKDIIRFHTIYWPIMLMALDLPLPKQVFGHGWLLVDGGKMSKSKGNVVDPVVLINEFGTDPVRYYLLHEIPFGSDGLFNNEIFIKKINSDLANDLGNLVSRTAAMIEKYFDGSIQPPVDKEEIDNELIDMAISLPEKLDEDIKKLKIPEALDHIWDLIKRANKYIDETTPWVLAKDENKKARLGTVLYNLVESLRFVATTLTPFLPETGEKIKTQLNIELDTWESLSAFDGTRAGTKVSKGEVIFPRIDVDKKIEELNKLKEEQLKATRKMQPLKPEISIDDVDKLDLRVVKVLECEPVKKSKKLLKLKVELGGEERQVLSGISQFYKPEDLIGKKVVLVANLKPAKLMGQLSQGMILAVATDDDSKLYTLDIPEDIPTGSIVR.

A 'HIGH' region motif is present at residues 14-24 (YYPSAKLHIGN). Residues Cys-129, Cys-132, Cys-146, and Cys-149 each coordinate Zn(2+). Residues 299-303 (KMSKS) carry the 'KMSKS' region motif. Lys-302 provides a ligand contact to ATP. Positions 542 to 644 (DVDKLDLRVV…EDIPTGSIVR (103 aa)) constitute a tRNA-binding domain.

The protein belongs to the class-I aminoacyl-tRNA synthetase family. MetG type 2A subfamily. As to quaternary structure, homodimer. The cofactor is Zn(2+).

Its subcellular location is the cytoplasm. The catalysed reaction is tRNA(Met) + L-methionine + ATP = L-methionyl-tRNA(Met) + AMP + diphosphate. In terms of biological role, is required not only for elongation of protein synthesis but also for the initiation of all mRNA translation through initiator tRNA(fMet) aminoacylation. The protein is Methionine--tRNA ligase (metG) of Clostridium acetobutylicum (strain ATCC 824 / DSM 792 / JCM 1419 / IAM 19013 / LMG 5710 / NBRC 13948 / NRRL B-527 / VKM B-1787 / 2291 / W).